Here is a 91-residue protein sequence, read N- to C-terminus: Small ribosomal subunit protein uS15 (91 aa).

The protein belongs to the universal ribosomal protein uS15 family. In terms of assembly, part of the 30S ribosomal subunit. Forms a bridge to the 50S subunit in the 70S ribosome, contacting the 23S rRNA.

In terms of biological role, one of the primary rRNA binding proteins, it binds directly to 16S rRNA where it helps nucleate assembly of the platform of the 30S subunit by binding and bridging several RNA helices of the 16S rRNA. Its function is as follows. Forms an intersubunit bridge (bridge B4) with the 23S rRNA of the 50S subunit in the ribosome. The protein is Small ribosomal subunit protein uS15 of Rickettsia canadensis (strain McKiel).